A 60-amino-acid polypeptide reads, in one-letter code: Ribosome-inactivating protein dianthin-32 (60 aa).

This sequence belongs to the ribosome-inactivating protein family. Type 1 RIP subfamily.

The catalysed reaction is Endohydrolysis of the N-glycosidic bond at one specific adenosine on the 28S rRNA.. Its function is as follows. Single-chain ribosome-inactivating protein. This chain is Ribosome-inactivating protein dianthin-32, found in Dianthus caryophyllus (Carnation).